The sequence spans 93 residues: MPRSLKKGPFVDDHLIKKVDAQNEAGSKNVIKTWSRRSMIIPAMLGHTIAVHNGKTHIPVFVTESMVGHKLGEFSPTRTFRGHVKDDRKSKRR.

The tract at residues 73 to 93 (EFSPTRTFRGHVKDDRKSKRR) is disordered. A compositionally biased stretch (basic and acidic residues) spans 83–93 (HVKDDRKSKRR).

It belongs to the universal ribosomal protein uS19 family.

Its function is as follows. Protein S19 forms a complex with S13 that binds strongly to the 16S ribosomal RNA. The sequence is that of Small ribosomal subunit protein uS19 from Streptomyces avermitilis (strain ATCC 31267 / DSM 46492 / JCM 5070 / NBRC 14893 / NCIMB 12804 / NRRL 8165 / MA-4680).